A 1131-amino-acid chain; its full sequence is Homeobox-DDT domain protein RLT3 (1131 aa).

Residues 2–56 constitute a DNA-binding region (homeobox; TALE-type); it reads KRKSPLQVQALEGFYLEQMYPTPKEMEDLGKSLGLTLKEVRGWFKRRRSRGKGVK. Over residues 239–251 the composition is skewed to basic residues; the sequence is LQKRSTEKKRRSI. A disordered region spans residues 239-264; it reads LQKRSTEKKRRSIHREAELNKDETQR. The span at 252–264 shows a compositional bias: basic and acidic residues; it reads HREAELNKDETQR. The region spanning 365 to 424 is the DDT domain; the sequence is PESVKKLFKVVHFLYTYSVTLDIGPFTLDEFTRAFHDKDSLLLGKIHLSLLKLLLLDVET. Positions 579–609 are disordered; it reads EDPDKSQSDSDDSGSVDDESDDCSISSGDEI. Residues 587-600 are compositionally biased toward acidic residues; the sequence is DSDDSGSVDDESDD.

It localises to the nucleus. In terms of biological role, transcriptional regulator required for the maintenance of the plant vegetative phase. May prevent the early activation of the vegetative-to-reproductive transition by regulating key genes that contribute to flower timing. The polypeptide is Homeobox-DDT domain protein RLT3 (Arabidopsis thaliana (Mouse-ear cress)).